A 220-amino-acid polypeptide reads, in one-letter code: Pyrrolidone-carboxylate peptidase 1 (220 aa).

Catalysis depends on residues glutamate 80, cysteine 143, and histidine 172.

The protein belongs to the peptidase C15 family. Homotetramer.

Its subcellular location is the cytoplasm. The enzyme catalyses Release of an N-terminal pyroglutamyl group from a polypeptide, the second amino acid generally not being Pro.. Its function is as follows. Removes 5-oxoproline from various penultimate amino acid residues except L-proline. In Photorhabdus laumondii subsp. laumondii (strain DSM 15139 / CIP 105565 / TT01) (Photorhabdus luminescens subsp. laumondii), this protein is Pyrrolidone-carboxylate peptidase 1.